Reading from the N-terminus, the 566-residue chain is Potassium-transporting ATPase potassium-binding subunit (566 aa).

Helical transmembrane passes span 6 to 26, 60 to 80, 128 to 148, 167 to 187, 247 to 267, 276 to 296, 331 to 351, 361 to 381, 383 to 403, 423 to 443, 492 to 512, and 530 to 550; these read VALL…LGIA, AAAI…LMLF, LGLT…AFVL, IWRI…LFLA, LTNF…CICF, VGSA…LLIM, FGLW…CGAV, LGGL…GGVG, GWYG…LMIG, IGLL…VILP, LMFV…GALI, and LFVG…FIPA.

This sequence belongs to the KdpA family. As to quaternary structure, the system is composed of three essential subunits: KdpA, KdpB and KdpC.

The protein localises to the cell inner membrane. Functionally, part of the high-affinity ATP-driven potassium transport (or Kdp) system, which catalyzes the hydrolysis of ATP coupled with the electrogenic transport of potassium into the cytoplasm. This subunit binds the periplasmic potassium ions and delivers the ions to the membrane domain of KdpB through an intramembrane tunnel. The sequence is that of Potassium-transporting ATPase potassium-binding subunit from Tolumonas auensis (strain DSM 9187 / NBRC 110442 / TA 4).